A 305-amino-acid chain; its full sequence is Homoserine O-acetyltransferase (305 aa).

The active-site Acyl-thioester intermediate is Cys142. The substrate site is built by Lys163 and Ser192. His235 serves as the catalytic Proton acceptor. The active site involves Glu237. Arg249 lines the substrate pocket.

This sequence belongs to the MetA family.

It is found in the cytoplasm. It carries out the reaction L-homoserine + acetyl-CoA = O-acetyl-L-homoserine + CoA. It participates in amino-acid biosynthesis; L-methionine biosynthesis via de novo pathway; O-acetyl-L-homoserine from L-homoserine: step 1/1. Its function is as follows. Transfers an acetyl group from acetyl-CoA to L-homoserine, forming acetyl-L-homoserine. In Cereibacter sphaeroides (strain ATCC 17025 / ATH 2.4.3) (Rhodobacter sphaeroides), this protein is Homoserine O-acetyltransferase.